The primary structure comprises 188 residues: Protein GrpE (188 aa).

A disordered region spans residues 1–24; it reads MSDENKPGEAAELDAGVAPEAQPE.

Belongs to the GrpE family. As to quaternary structure, homodimer.

The protein localises to the cytoplasm. In terms of biological role, participates actively in the response to hyperosmotic and heat shock by preventing the aggregation of stress-denatured proteins, in association with DnaK and GrpE. It is the nucleotide exchange factor for DnaK and may function as a thermosensor. Unfolded proteins bind initially to DnaJ; upon interaction with the DnaJ-bound protein, DnaK hydrolyzes its bound ATP, resulting in the formation of a stable complex. GrpE releases ADP from DnaK; ATP binding to DnaK triggers the release of the substrate protein, thus completing the reaction cycle. Several rounds of ATP-dependent interactions between DnaJ, DnaK and GrpE are required for fully efficient folding. This is Protein GrpE from Hyphomonas neptunium (strain ATCC 15444).